The sequence spans 795 residues: Lon protease (795 aa).

In terms of domain architecture, Lon N-terminal spans 17–214 (YPLMPLRDIV…KVYKFLQDEI (198 aa)). ATP is bound at residue 370 to 377 (GPPGVGKT). In terms of domain architecture, Lon proteolytic spans 605–787 (KPLVGVATGL…EEVFKIALVR (183 aa)). Active-site residues include serine 692 and lysine 735.

The protein belongs to the peptidase S16 family. As to quaternary structure, homohexamer. Organized in a ring with a central cavity.

It is found in the cytoplasm. The catalysed reaction is Hydrolysis of proteins in presence of ATP.. Functionally, ATP-dependent serine protease that mediates the selective degradation of mutant and abnormal proteins as well as certain short-lived regulatory proteins. Required for cellular homeostasis and for survival from DNA damage and developmental changes induced by stress. Degrades polypeptides processively to yield small peptide fragments that are 5 to 10 amino acids long. Binds to DNA in a double-stranded, site-specific manner. In Aquifex aeolicus (strain VF5), this protein is Lon protease.